A 400-amino-acid polypeptide reads, in one-letter code: Cytoplasmic polyadenylated homeobox-like protein 2 (400 aa).

The disordered stretch occupies residues 1–29 (MSSQAFPAEEDHHNEERQTKKKRKTKHRH). Residues 9 to 18 (EEDHHNEERQ) are compositionally biased toward basic and acidic residues. Positions 19 to 29 (TKKKRKTKHRH) are enriched in basic residues. The segment at residues 24-83 (KTKHRHKFSEELLQELKEIFGENGYPDFTTRKTLANKFDCPVNVINNWFQNNRARLPPEE) is a DNA-binding region (homeobox).

It is found in the nucleus. The sequence is that of Cytoplasmic polyadenylated homeobox-like protein 2 from Homo sapiens (Human).